A 638-amino-acid chain; its full sequence is Chaperone protein DnaK (638 aa).

Threonine 198 bears the Phosphothreonine; by autocatalysis mark. Residues 600 to 638 (KTQTEGGAQPGAEADGDTGAKGGEKVVDADFEEVKDDKK) are disordered. Over residues 628 to 638 (ADFEEVKDDKK) the composition is skewed to acidic residues.

It belongs to the heat shock protein 70 family.

Acts as a chaperone. The polypeptide is Chaperone protein DnaK (Geobacter metallireducens (strain ATCC 53774 / DSM 7210 / GS-15)).